The primary structure comprises 231 residues: ATP phosphoribosyltransferase (231 aa).

The protein belongs to the ATP phosphoribosyltransferase family. Short subfamily. As to quaternary structure, heteromultimer composed of HisG and HisZ subunits.

It is found in the cytoplasm. It catalyses the reaction 1-(5-phospho-beta-D-ribosyl)-ATP + diphosphate = 5-phospho-alpha-D-ribose 1-diphosphate + ATP. It functions in the pathway amino-acid biosynthesis; L-histidine biosynthesis; L-histidine from 5-phospho-alpha-D-ribose 1-diphosphate: step 1/9. Its function is as follows. Catalyzes the condensation of ATP and 5-phosphoribose 1-diphosphate to form N'-(5'-phosphoribosyl)-ATP (PR-ATP). Has a crucial role in the pathway because the rate of histidine biosynthesis seems to be controlled primarily by regulation of HisG enzymatic activity. This Brucella ovis (strain ATCC 25840 / 63/290 / NCTC 10512) protein is ATP phosphoribosyltransferase.